The following is a 924-amino-acid chain: Hexokinase-3 (924 aa).

The interval methionine 1–serine 27 is disordered. Hexokinase domains lie at serine 27–alanine 471 and alanine 477–arginine 913. Residues histidine 84–valine 220 form a hexokinase small subdomain 1 region. Glutamate 95 to serine 102 lines the ATP pocket. Glutamate 95 to arginine 104 is a D-glucose 6-phosphate binding site. Residues serine 168, threonine 185–lysine 186, and asparagine 221–aspartate 222 each bind D-glucose. Positions asparagine 221–aspartate 460 are hexokinase large subdomain 1. Positions 222 and 245 each coordinate D-glucose 6-phosphate. D-glucose contacts are provided by residues asparagine 248, glutamate 273, and glutamine 304 to glutamate 307. Residue glycine 426–arginine 428 participates in D-glucose 6-phosphate binding. ATP contacts are provided by residues cysteine 438–isoleucine 439 and aspartate 542–asparagine 547. The segment at aspartate 531–valine 662 is hexokinase small subdomain 2. Residue aspartate 542 to threonine 546 participates in D-glucose 6-phosphate binding. Residues serine 610 to phenylalanine 611, threonine 627 to lysine 628, and asparagine 663 to aspartate 664 each bind D-glucose. The segment at asparagine 663 to aspartate 902 is hexokinase large subdomain 2. Residues aspartate 664 and threonine 687 each contribute to the D-glucose 6-phosphate site. Residue threonine 687 coordinates ATP. D-glucose is bound by residues threonine 689–asparagine 690, glutamate 715, and glutamate 749. ATP-binding positions include glycine 754 to methionine 755, threonine 791 to serine 795, and threonine 870 to leucine 874. D-glucose 6-phosphate contacts are provided by residues aspartate 868–threonine 870 and serine 904.

This sequence belongs to the hexokinase family.

The catalysed reaction is a D-hexose + ATP = a D-hexose 6-phosphate + ADP + H(+). It carries out the reaction D-fructose + ATP = D-fructose 6-phosphate + ADP + H(+). The enzyme catalyses D-glucose + ATP = D-glucose 6-phosphate + ADP + H(+). It participates in carbohydrate metabolism; hexose metabolism. Its pathway is carbohydrate degradation; glycolysis; D-glyceraldehyde 3-phosphate and glycerone phosphate from D-glucose: step 1/4. Hexokinase is an allosteric enzyme inhibited by its product D-glucose 6-phosphate. Functionally, catalyzes the phosphorylation of hexose, such as D-glucose and D-fructose, to hexose 6-phosphate (D-glucose 6-phosphate and D-fructose 6-phosphate, respectively). Mediates the initial step of glycolysis by catalyzing phosphorylation of D-glucose to D-glucose 6-phosphate. The protein is Hexokinase-3 of Rattus norvegicus (Rat).